The chain runs to 198 residues: TATA-box-binding protein (198 aa).

Tandem repeats lie at residues 14–90 (IENI…IKTL) and 105–181 (IQNI…FDKL).

Belongs to the TBP family.

Its function is as follows. General factor that plays a role in the activation of archaeal genes transcribed by RNA polymerase. Binds specifically to the TATA box promoter element which lies close to the position of transcription initiation. The chain is TATA-box-binding protein from Saccharolobus shibatae (strain ATCC 51178 / DSM 5389 / JCM 8931 / NBRC 15437 / B12) (Sulfolobus shibatae).